The chain runs to 710 residues: Amyloid beta precursor protein binding family B member 1 (710 aa).

The segment covering 1–15 (MSVPSSLSQSAINAN) has biased composition (polar residues). Disordered regions lie at residues 1–24 (MSVPSSLSQSAINANSHGGPALSL), 131–254 (GLRG…TDSD), 276–299 (GTTQWEPPGRASPSQGSSPQEESQ), and 340–365 (TFPAQSLSPEPLPQEEEKLPPRNTNP). The span at 145 to 173 (GPDEGEEKAAGEAEEEEEDDDDEEEEEDL) shows a compositional bias: acidic residues. Residue Lys204 is modified to N6-acetyllysine. Residues 223–234 (SWATLSQGSPSY) are compositionally biased toward polar residues. The 33-residue stretch at 253-285 (SDLPAGWMRVQDTSGTYYWHIPTGTTQWEPPGR) folds into the WW domain. Over residues 287–299 (SPSQGSSPQEESQ) the composition is skewed to low complexity. Positions 370-509 (FAVRSLGWVE…SKIMAERRNA (140 aa)) constitute a PID 1 domain. Ser459 carries the phosphoserine; by PKC modification. At Ser517 the chain carries Phosphoserine. In terms of domain architecture, PID 2 spans 542 to 699 (KFQVYYLGNV…RRGVQSLWGS (158 aa)). Tyr547 is subject to Phosphotyrosine; by ABL1. Ser610 is subject to Phosphoserine; by SGK1. Lys701 is modified (N6-acetyllysine).

In terms of assembly, component of a complex, at least composed of APBB1, RASD1/DEXRAS1 and APP. Interacts (via PID domain 2) with APP (with the intracellular domain of the amyloid-beta precursor protein). Interacts (via PID domain 2) with RASD1/DEXRAS1; impairs the transcription activation activity. Interacts (via PID domain 1) with KAT5/TIP60. Interacts (via the WW domain) with the proline-rich region of APBB1IP. Interacts with TSHZ1 and TSHZ2. Interacts (via the WW domain) with histone H2AX (when phosphorylated on 'Tyr-142') and the proline-rich region of ENAH. Interacts with MAPK8. Interacts (via PID domain 1) with TSHZ3 (via homeobox domain). Interacts with SET. Found in a trimeric complex with HDAC1 and TSHZ3; the interaction between HDAC1 and APBB1 is mediated by TSHZ3. Interacts (via WWW domain) with NEK6. Interacts (via WWW domain) with ABL1. Interacts with RNF157. Interacts with ARF6. Phosphorylation at Ser-610 by SGK1 promotes its localization to the nucleus. Phosphorylated following nuclear translocation. Phosphorylation at Tyr-547 by ABL1 enhances transcriptional activation activity and reduces the affinity for RASD1/DEXRAS1. Phosphorylated at Ser-459 by PKC upon insulin activation. Post-translationally, acetylation at Lys-204 and Lys-701 by KAT5 promotes its transcription activator activity. In terms of processing, polyubiquitination by RNF157 leads to degradation by the proteasome. As to expression, highly expressed in brain; strongly reduced in post-mortem elderly subjects with Alzheimer disease. Expressed preferentially in the brain.

Its subcellular location is the cell membrane. It localises to the cytoplasm. It is found in the nucleus. The protein resides in the cell projection. The protein localises to the growth cone. Its subcellular location is the nucleus speckle. Functionally, transcription coregulator that can have both coactivator and corepressor functions. Adapter protein that forms a transcriptionally active complex with the gamma-secretase-derived amyloid precursor protein (APP) intracellular domain. Plays a central role in the response to DNA damage by translocating to the nucleus and inducing apoptosis. May act by specifically recognizing and binding histone H2AX phosphorylated on 'Tyr-142' (H2AXY142ph) at double-strand breaks (DSBs), recruiting other pro-apoptosis factors such as MAPK8/JNK1. Required for histone H4 acetylation at double-strand breaks (DSBs). Its ability to specifically bind modified histones and chromatin modifying enzymes such as KAT5/TIP60, probably explains its transcription activation activity. Functions in association with TSHZ3, SET and HDAC factors as a transcriptional repressor, that inhibits the expression of CASP4. Associates with chromatin in a region surrounding the CASP4 transcriptional start site(s). Involved in hippocampal neurite branching and neuromuscular junction formation, as a result plays a role in spatial memory functioning. Plays a role in the maintenance of lens transparency. May play a role in muscle cell strength. Acts as a molecular adapter that functions in neurite outgrowth by activating the RAC1-ARF6 axis upon insulin treatment. The polypeptide is Amyloid beta precursor protein binding family B member 1 (Homo sapiens (Human)).